We begin with the raw amino-acid sequence, 319 residues long: Type II methyltransferase M.MpnI (319 aa).

Belongs to the N(4)/N(6)-methyltransferase family.

It catalyses the reaction a 2'-deoxyadenosine in DNA + S-adenosyl-L-methionine = an N(6)-methyl-2'-deoxyadenosine in DNA + S-adenosyl-L-homocysteine + H(+). In terms of biological role, a methylase that recognizes the double-stranded sequence 5'-CTAT-3' and methylates A-3 on one strand; probably responsible for all of the methylation on this site in the genome. This chain is Type II methyltransferase M.MpnI, found in Mycoplasma pneumoniae (strain ATCC 29342 / M129 / Subtype 1) (Mycoplasmoides pneumoniae).